Consider the following 246-residue polypeptide: Zorya protein ZorB (246 aa).

Residues Phe20–Val40 traverse the membrane as a helical segment. Positions Cys86–Gly218 constitute an OmpA-like domain.

This sequence belongs to the MotB family.

Its subcellular location is the cell inner membrane. Component of antiviral defense system Zorya type I, composed of ZorA, ZorB, ZorC and ZorD. Expression of Zorya type I in E.coli (strain MG1655) confers 10,000-fold resistance to phage SECphi27, 100-fold resistance to lambda, and 10-fold resistance to T7. While most T7 infected Zorya-containing cells undergo abortive infection, a minority produce viable phage progeny. These eventually accumulate to a high multiplicity of infection, leading to culture collapse by 2 hours after initial infection. ZorA and ZorB probably assemble in the cell inner membrane and exert their effect there. In Escherichia coli O139:H28 (strain E24377A / ETEC), this protein is Zorya protein ZorB.